The following is a 170-amino-acid chain: Adenine phosphoribosyltransferase (170 aa).

Belongs to the purine/pyrimidine phosphoribosyltransferase family. Homodimer.

The protein resides in the cytoplasm. It catalyses the reaction AMP + diphosphate = 5-phospho-alpha-D-ribose 1-diphosphate + adenine. Its pathway is purine metabolism; AMP biosynthesis via salvage pathway; AMP from adenine: step 1/1. Functionally, catalyzes a salvage reaction resulting in the formation of AMP, that is energically less costly than de novo synthesis. This chain is Adenine phosphoribosyltransferase, found in Trichodesmium erythraeum (strain IMS101).